A 612-amino-acid chain; its full sequence is Dihydroxy-acid dehydratase (612 aa).

Aspartate 81 serves as a coordination point for Mg(2+). Cysteine 122 serves as a coordination point for [2Fe-2S] cluster. Mg(2+) contacts are provided by aspartate 123 and lysine 124. An N6-carboxylysine modification is found at lysine 124. Cysteine 193 contributes to the [2Fe-2S] cluster binding site. Glutamate 489 is a binding site for Mg(2+). Serine 515 serves as the catalytic Proton acceptor.

The protein belongs to the IlvD/Edd family. In terms of assembly, homodimer. [2Fe-2S] cluster serves as cofactor. Mg(2+) is required as a cofactor.

The catalysed reaction is (2R)-2,3-dihydroxy-3-methylbutanoate = 3-methyl-2-oxobutanoate + H2O. It catalyses the reaction (2R,3R)-2,3-dihydroxy-3-methylpentanoate = (S)-3-methyl-2-oxopentanoate + H2O. Its pathway is amino-acid biosynthesis; L-isoleucine biosynthesis; L-isoleucine from 2-oxobutanoate: step 3/4. It functions in the pathway amino-acid biosynthesis; L-valine biosynthesis; L-valine from pyruvate: step 3/4. Functionally, functions in the biosynthesis of branched-chain amino acids. Catalyzes the dehydration of (2R,3R)-2,3-dihydroxy-3-methylpentanoate (2,3-dihydroxy-3-methylvalerate) into 2-oxo-3-methylpentanoate (2-oxo-3-methylvalerate) and of (2R)-2,3-dihydroxy-3-methylbutanoate (2,3-dihydroxyisovalerate) into 2-oxo-3-methylbutanoate (2-oxoisovalerate), the penultimate precursor to L-isoleucine and L-valine, respectively. The sequence is that of Dihydroxy-acid dehydratase from Pseudomonas aeruginosa (strain LESB58).